The chain runs to 301 residues: HTH-type transcriptional regulator EstR (301 aa).

One can recognise an HTH lysR-type domain in the interval 5–62 (PSLRQLSYLVTLSETLHFTEAARRSFVTQSTLSGGIMELERLLGGVLVERDRQNVRLT). The H-T-H motif DNA-binding region spans 22–41 (FTEAARRSFVTQSTLSGGIM).

Belongs to the LysR transcriptional regulatory family.

Its function is as follows. Transcriptional regulator of the esterase operon. The chain is HTH-type transcriptional regulator EstR (estR) from Acinetobacter baylyi (strain ATCC 33305 / BD413 / ADP1).